Reading from the N-terminus, the 506-residue chain is Ent-kaurenoic acid oxidase (506 aa).

Residues 11–31 (AWAAGDLWVLAAAVVAGVVLV) form a helical membrane-spanning segment. C451 provides a ligand contact to heme.

Belongs to the cytochrome P450 family. It depends on heme as a cofactor. In terms of tissue distribution, expressed in roots and panicles. Expressed at low levels in vegetative shoot apices, leaf sheaths, leaf blades and stems.

The protein localises to the endoplasmic reticulum membrane. The enzyme catalyses ent-kaur-16-en-19-oate + 3 reduced [NADPH--hemoprotein reductase] + 3 O2 = gibberellin A12 + 3 oxidized [NADPH--hemoprotein reductase] + 4 H2O + 4 H(+). It catalyses the reaction ent-kaur-16-en-19-oate + reduced [NADPH--hemoprotein reductase] + O2 = ent-7alpha-hydroxykaur-16-en-19-oate + oxidized [NADPH--hemoprotein reductase] + H2O + H(+). The catalysed reaction is ent-7alpha-hydroxykaur-16-en-19-oate + reduced [NADPH--hemoprotein reductase] + O2 = gibberellin A12 aldehyde + oxidized [NADPH--hemoprotein reductase] + 2 H2O + H(+). It carries out the reaction gibberellin A12 aldehyde + reduced [NADPH--hemoprotein reductase] + O2 = gibberellin A12 + oxidized [NADPH--hemoprotein reductase] + H2O + 2 H(+). It participates in plant hormone biosynthesis; gibberellin biosynthesis. Functionally, involved in gibberellin (GA) biosynthesis. Catalyzes three successive oxidations of ent-kaurenoic acid giving gibberellin 12 (GA12), a key step in GAs biosynthesis. GAs, which are involved many processes, including stem elongation, play a central role in plant development. Required for pollen germination and elongation. This chain is Ent-kaurenoic acid oxidase, found in Oryza sativa subsp. japonica (Rice).